The sequence spans 741 residues: Polyribonucleotide nucleotidyltransferase (741 aa).

2 residues coordinate Mg(2+): aspartate 489 and aspartate 495. In terms of domain architecture, KH spans 556 to 615 (PKIDSIQIPVDKIKVVIGKGGETIDKIIAETGVTIDIDEEGLVQIFSSDQDAIDRAKTII). Residues 625–693 (GEVYTVPVVR…EKGRVDASIK (69 aa)) enclose the S1 motif domain. Residues 696–741 (LPKPEKNEDGENGEEHRHCCCSHHKPDHHSESMEAPKKSDESETKE) form a disordered region. 2 stretches are compositionally biased toward basic and acidic residues: residues 698–713 (KPEK…EHRH) and 723–741 (HHSE…ETKE).

Belongs to the polyribonucleotide nucleotidyltransferase family. Mg(2+) is required as a cofactor.

The protein resides in the cytoplasm. It carries out the reaction RNA(n+1) + phosphate = RNA(n) + a ribonucleoside 5'-diphosphate. In terms of biological role, involved in mRNA degradation. Catalyzes the phosphorolysis of single-stranded polyribonucleotides processively in the 3'- to 5'-direction. The sequence is that of Polyribonucleotide nucleotidyltransferase from Streptococcus thermophilus (strain ATCC BAA-491 / LMD-9).